The chain runs to 149 residues: Transcription antitermination protein NusB (149 aa).

The protein belongs to the NusB family.

Its function is as follows. Involved in transcription antitermination. Required for transcription of ribosomal RNA (rRNA) genes. Binds specifically to the boxA antiterminator sequence of the ribosomal RNA (rrn) operons. In Acinetobacter baylyi (strain ATCC 33305 / BD413 / ADP1), this protein is Transcription antitermination protein NusB.